Here is a 168-residue protein sequence, read N- to C-terminus: GTP-dependent dephospho-CoA kinase (168 aa).

Aspartate 49, isoleucine 50, valine 51, aspartate 68, lysine 70, and glutamate 120 together coordinate GTP.

It belongs to the GTP-dependent DPCK family.

The catalysed reaction is 3'-dephospho-CoA + GTP = GDP + CoA + H(+). It participates in cofactor biosynthesis; coenzyme A biosynthesis. Its function is as follows. Catalyzes the GTP-dependent phosphorylation of the 3'-hydroxyl group of dephosphocoenzyme A to form coenzyme A (CoA). In Pyrobaculum islandicum (strain DSM 4184 / JCM 9189 / GEO3), this protein is GTP-dependent dephospho-CoA kinase.